The primary structure comprises 236 residues: Leucyl/phenylalanyl-tRNA--protein transferase (236 aa).

It belongs to the L/F-transferase family.

The protein localises to the cytoplasm. It catalyses the reaction N-terminal L-lysyl-[protein] + L-leucyl-tRNA(Leu) = N-terminal L-leucyl-L-lysyl-[protein] + tRNA(Leu) + H(+). The enzyme catalyses N-terminal L-arginyl-[protein] + L-leucyl-tRNA(Leu) = N-terminal L-leucyl-L-arginyl-[protein] + tRNA(Leu) + H(+). It carries out the reaction L-phenylalanyl-tRNA(Phe) + an N-terminal L-alpha-aminoacyl-[protein] = an N-terminal L-phenylalanyl-L-alpha-aminoacyl-[protein] + tRNA(Phe). Its function is as follows. Functions in the N-end rule pathway of protein degradation where it conjugates Leu, Phe and, less efficiently, Met from aminoacyl-tRNAs to the N-termini of proteins containing an N-terminal arginine or lysine. This is Leucyl/phenylalanyl-tRNA--protein transferase from Yersinia enterocolitica serotype O:8 / biotype 1B (strain NCTC 13174 / 8081).